Here is a 586-residue protein sequence, read N- to C-terminus: Arginine--tRNA ligase (586 aa).

Positions 131 to 141 (ANPTGPMHVGH) match the 'HIGH' region motif.

It belongs to the class-I aminoacyl-tRNA synthetase family. In terms of assembly, monomer.

It localises to the cytoplasm. It catalyses the reaction tRNA(Arg) + L-arginine + ATP = L-arginyl-tRNA(Arg) + AMP + diphosphate. The protein is Arginine--tRNA ligase of Azorhizobium caulinodans (strain ATCC 43989 / DSM 5975 / JCM 20966 / LMG 6465 / NBRC 14845 / NCIMB 13405 / ORS 571).